The primary structure comprises 649 residues: Protein teflon (649 aa).

Residues 33-56 form a C2H2-type 1 zinc finger; the sequence is LYCHFCRDLFTQLPEFLRHLQSNH. The segment at 78-126 is disordered; sequence EQGKAHEDAQSAGHNSSSGDSSSLMNSEDSRAIEGSEDNSDNSPMKPEQ. The span at 88–104 shows a compositional bias: low complexity; the sequence is SAGHNSSSGDSSSLMNS. 2 consecutive C2H2-type zinc fingers follow at residues 599–621 and 625–648; these read YFCKCCDDIFILKKEYLKHLISH and FQCTKCIKVFKYKGYYEKHLRNAH.

The protein belongs to the Teflon family. Expressed at a low level in a variety of tissues, highest expression is in testis.

It is found in the nucleus. The protein resides in the chromosome. Specifically required in males for proper segregation of autosomal bivalents at meiosis I. Expression is required in the male germ line prior to spermatocyte stage S4. May have a role as a bridging molecule maintaining adhesion to hold autosome bivalents together via heterochromatic connections. The chain is Protein teflon from Drosophila melanogaster (Fruit fly).